Reading from the N-terminus, the 258-residue chain is Ribosomal RNA small subunit methyltransferase A (258 aa).

Asn-12, Leu-14, Gly-38, Glu-59, Asp-83, and Asn-100 together coordinate S-adenosyl-L-methionine.

This sequence belongs to the class I-like SAM-binding methyltransferase superfamily. rRNA adenine N(6)-methyltransferase family. RsmA subfamily.

The protein localises to the cytoplasm. It carries out the reaction adenosine(1518)/adenosine(1519) in 16S rRNA + 4 S-adenosyl-L-methionine = N(6)-dimethyladenosine(1518)/N(6)-dimethyladenosine(1519) in 16S rRNA + 4 S-adenosyl-L-homocysteine + 4 H(+). Functionally, specifically dimethylates two adjacent adenosines (A1518 and A1519) in the loop of a conserved hairpin near the 3'-end of 16S rRNA in the 30S particle. May play a critical role in biogenesis of 30S subunits. This Metamycoplasma arthritidis (strain 158L3-1) (Mycoplasma arthritidis) protein is Ribosomal RNA small subunit methyltransferase A.